The sequence spans 70 residues: MILKKEKKRIYILNNNIKNLNLKENVDVLNKRHKKNIIFQTDIYICSTYKGNKNIKKKSRTIIFIIKVNV.

This is PPF2L antigen from Plasmodium falciparum (isolate Palo Alto / Uganda).